We begin with the raw amino-acid sequence, 176 residues long: Large ribosomal subunit protein uL10 (176 aa).

It belongs to the universal ribosomal protein uL10 family. Part of the ribosomal stalk of the 50S ribosomal subunit. The N-terminus interacts with L11 and the large rRNA to form the base of the stalk. The C-terminus forms an elongated spine to which L12 dimers bind in a sequential fashion forming a multimeric L10(L12)X complex.

Forms part of the ribosomal stalk, playing a central role in the interaction of the ribosome with GTP-bound translation factors. This Carboxydothermus hydrogenoformans (strain ATCC BAA-161 / DSM 6008 / Z-2901) protein is Large ribosomal subunit protein uL10.